Here is a 187-residue protein sequence, read N- to C-terminus: Protein ECM23 (187 aa).

Disordered stretches follow at residues 106–127 (GKKSLAGYRPKSRKKQTILPNG) and 167–187 (KKIRSQQSSDDGTKNFIFKNK). Residues 126–180 (NGQPKECATCGDTWTSQWRSGPNGNVELCSRCGIAYRKKMEKKIRSQQSSDDGTK) form a GATA-type zinc finger.

Functionally, involved in morphogenesis. May be involved in cell wall organization and biogenesis. The polypeptide is Protein ECM23 (ECM23) (Saccharomyces cerevisiae (strain ATCC 204508 / S288c) (Baker's yeast)).